The chain runs to 577 residues: Proline--tRNA ligase (577 aa).

Belongs to the class-II aminoacyl-tRNA synthetase family. ProS type 1 subfamily. Homodimer.

The protein resides in the cytoplasm. It catalyses the reaction tRNA(Pro) + L-proline + ATP = L-prolyl-tRNA(Pro) + AMP + diphosphate. Its function is as follows. Catalyzes the attachment of proline to tRNA(Pro) in a two-step reaction: proline is first activated by ATP to form Pro-AMP and then transferred to the acceptor end of tRNA(Pro). As ProRS can inadvertently accommodate and process non-cognate amino acids such as alanine and cysteine, to avoid such errors it has two additional distinct editing activities against alanine. One activity is designated as 'pretransfer' editing and involves the tRNA(Pro)-independent hydrolysis of activated Ala-AMP. The other activity is designated 'posttransfer' editing and involves deacylation of mischarged Ala-tRNA(Pro). The misacylated Cys-tRNA(Pro) is not edited by ProRS. The chain is Proline--tRNA ligase from Helicobacter pylori (strain ATCC 700392 / 26695) (Campylobacter pylori).